The sequence spans 209 residues: MAGSTPAPHGDGPLVGVLALQGDVREHVRVLEGFGARTRLVRQPKDLPGISGLVIPGGESTVMDKLSRQFGIAEPLRAAIDDGLPVYGTCAGLIMLADEIVDAIHDQRGIGGLDVSVRRNAFGSQTASFEVDLDVPALGAPPVHAVFIRAPVVASVGPAASALASLDDGRVVAVRQGALLGTSFHPEVTGDLRFHRLFLDMVEDAGRTL.

L-glutamine is bound at residue 58–60 (GES). The active-site Nucleophile is Cys-90. Residues Arg-119 and 148 to 149 (IR) each bind L-glutamine. Active-site charge relay system residues include His-185 and Glu-187.

The protein belongs to the glutaminase PdxT/SNO family. In the presence of PdxS, forms a dodecamer of heterodimers. Only shows activity in the heterodimer.

The enzyme catalyses aldehydo-D-ribose 5-phosphate + D-glyceraldehyde 3-phosphate + L-glutamine = pyridoxal 5'-phosphate + L-glutamate + phosphate + 3 H2O + H(+). It carries out the reaction L-glutamine + H2O = L-glutamate + NH4(+). Its pathway is cofactor biosynthesis; pyridoxal 5'-phosphate biosynthesis. In terms of biological role, catalyzes the hydrolysis of glutamine to glutamate and ammonia as part of the biosynthesis of pyridoxal 5'-phosphate. The resulting ammonia molecule is channeled to the active site of PdxS. This chain is Pyridoxal 5'-phosphate synthase subunit PdxT, found in Clavibacter sepedonicus (Clavibacter michiganensis subsp. sepedonicus).